A 445-amino-acid chain; its full sequence is Phosphoglucosamine mutase (445 aa).

The Phosphoserine intermediate role is filled by Ser-102. Residues Ser-102, Asp-241, Asp-243, and Asp-245 each contribute to the Mg(2+) site. Ser-102 is subject to Phosphoserine.

Belongs to the phosphohexose mutase family. Requires Mg(2+) as cofactor. Activated by phosphorylation.

The catalysed reaction is alpha-D-glucosamine 1-phosphate = D-glucosamine 6-phosphate. In terms of biological role, catalyzes the conversion of glucosamine-6-phosphate to glucosamine-1-phosphate. In Acinetobacter baumannii (strain AB0057), this protein is Phosphoglucosamine mutase.